Reading from the N-terminus, the 165-residue chain is Protein SprT (165 aa).

Residues 22 to 163 form the SprT-like domain; it reads LAQANLKLGC…RCVHCGEQLV (142 aa). H78 contributes to the Zn(2+) binding site. E79 is a catalytic residue. H82 lines the Zn(2+) pocket.

It belongs to the SprT family. It depends on Zn(2+) as a cofactor.

The protein localises to the cytoplasm. The chain is Protein SprT from Shigella dysenteriae serotype 1 (strain Sd197).